The sequence spans 330 residues: Glycerol-3-phosphate dehydrogenase [NAD(P)+] (330 aa).

The NADPH site is built by W11, R33, and K105. Sn-glycerol 3-phosphate contacts are provided by K105, G133, and S135. A137 is a binding site for NADPH. Sn-glycerol 3-phosphate is bound by residues K188, D241, S251, R252, and N253. K188 serves as the catalytic Proton acceptor. R252 contacts NADPH. Positions 276 and 278 each coordinate NADPH.

The protein belongs to the NAD-dependent glycerol-3-phosphate dehydrogenase family.

It is found in the cytoplasm. The enzyme catalyses sn-glycerol 3-phosphate + NAD(+) = dihydroxyacetone phosphate + NADH + H(+). It catalyses the reaction sn-glycerol 3-phosphate + NADP(+) = dihydroxyacetone phosphate + NADPH + H(+). The protein operates within membrane lipid metabolism; glycerophospholipid metabolism. Its function is as follows. Catalyzes the reduction of the glycolytic intermediate dihydroxyacetone phosphate (DHAP) to sn-glycerol 3-phosphate (G3P), the key precursor for phospholipid synthesis. This is Glycerol-3-phosphate dehydrogenase [NAD(P)+] from Acidovorax ebreus (strain TPSY) (Diaphorobacter sp. (strain TPSY)).